The primary structure comprises 223 residues: Phosphoribosylformylglycinamidine synthase subunit PurQ (223 aa).

In terms of domain architecture, Glutamine amidotransferase type-1 spans 3–223 (FAVLVFPGSN…MVKSWREQNV (221 aa)). The Nucleophile role is filled by C85. Catalysis depends on residues H193 and E195.

As to quaternary structure, part of the FGAM synthase complex composed of 1 PurL, 1 PurQ and 2 PurS subunits.

It localises to the cytoplasm. It carries out the reaction N(2)-formyl-N(1)-(5-phospho-beta-D-ribosyl)glycinamide + L-glutamine + ATP + H2O = 2-formamido-N(1)-(5-O-phospho-beta-D-ribosyl)acetamidine + L-glutamate + ADP + phosphate + H(+). The enzyme catalyses L-glutamine + H2O = L-glutamate + NH4(+). Its pathway is purine metabolism; IMP biosynthesis via de novo pathway; 5-amino-1-(5-phospho-D-ribosyl)imidazole from N(2)-formyl-N(1)-(5-phospho-D-ribosyl)glycinamide: step 1/2. Its function is as follows. Part of the phosphoribosylformylglycinamidine synthase complex involved in the purines biosynthetic pathway. Catalyzes the ATP-dependent conversion of formylglycinamide ribonucleotide (FGAR) and glutamine to yield formylglycinamidine ribonucleotide (FGAM) and glutamate. The FGAM synthase complex is composed of three subunits. PurQ produces an ammonia molecule by converting glutamine to glutamate. PurL transfers the ammonia molecule to FGAR to form FGAM in an ATP-dependent manner. PurS interacts with PurQ and PurL and is thought to assist in the transfer of the ammonia molecule from PurQ to PurL. This is Phosphoribosylformylglycinamidine synthase subunit PurQ from Staphylococcus epidermidis (strain ATCC 35984 / DSM 28319 / BCRC 17069 / CCUG 31568 / BM 3577 / RP62A).